The following is a 556-amino-acid chain: Arginine--tRNA ligase 1 (556 aa).

A 'HIGH' region motif is present at residues 132 to 142; it reads ANPTGDLHLGH.

It belongs to the class-I aminoacyl-tRNA synthetase family. As to quaternary structure, monomer.

It is found in the cytoplasm. It carries out the reaction tRNA(Arg) + L-arginine + ATP = L-arginyl-tRNA(Arg) + AMP + diphosphate. The chain is Arginine--tRNA ligase 1 from Bacillus anthracis.